The following is a 441-amino-acid chain: uncharacterized protein (441 aa).

Helical transmembrane passes span 21–41, 51–71, 94–114, 118–138, 150–170, 195–215, 239–259, 260–280, 291–311, 334–354, 363–383, and 419–439; these read VVVALTFSAIVGGLVAGMSLG, LGGGATIALSYAMLGTFAVAI, AASTTGLKYAVLVALVLVTMS, VIPVHIAFIPILIPPLLGVFA, VLTFGLITPYMVLPVGFGGIF, AMLLPGAGMIFGLLLAIFVSY, QHILVAALGIIAALGVQLYTG, SMIIGALAGFMVFTFGGVIAW, VHMMAMIGFIMIAAAGFAAVM, LAALLMLVVGLLVTMGIGSSF, IYVPLSLAFGFSPMATIALVG, and VVPTFIHYNIPLIIFGWIAAM.

It localises to the cell membrane. This is an uncharacterized protein from Vibrio parahaemolyticus serotype O3:K6 (strain RIMD 2210633).